The sequence spans 417 residues: Cobalamin binding intrinsic factor (417 aa).

An N-terminal signal peptide occupies residues 1–22; the sequence is MAWFSLHLLHLLWAAAGTSTWA. Disulfide bonds link Cys-26–Cys-246, Cys-103–Cys-288, and Cys-143–Cys-182. Asn-100 carries N-linked (GlcNAc...) asparagine glycosylation. Asp-171 contributes to the cob(II)alamin binding site. Residue Ser-191 is modified to Phosphoserine. N-linked (GlcNAc...) asparagine glycosylation occurs at Asn-209. Cob(II)alamin is bound by residues Asp-222 and Gln-270. Asn-311 and Asn-330 each carry an N-linked (GlcNAc...) asparagine glycan. Residues 365 to 370 and 386 to 395 each bind cob(II)alamin; these read SWGLVV and WQFLSGKTPL. Residue Asn-413 is glycosylated (N-linked (GlcNAc...) asparagine).

This sequence belongs to the eukaryotic cobalamin transport proteins family. Interacts with CUBN (via CUB domains).

The protein resides in the secreted. Functionally, promotes absorption of the essential vitamin cobalamin (Cbl) in the ileum. After interaction with CUBN, the CBLIF-cobalamin complex is internalized via receptor-mediated endocytosis. The sequence is that of Cobalamin binding intrinsic factor (CBLIF) from Canis lupus familiaris (Dog).